Here is a 620-residue protein sequence, read N- to C-terminus: GTP-binding protein At3g49725, chloroplastic (620 aa).

The N-terminal 65 residues, 1 to 65 (MSVTTSFGIW…SSFLARDRLR (65 aa)), are a transit peptide targeting the chloroplast. Residues 57-100 (SFLARDRLRSKTPSSSPFSSKRHTPKTSEIEEESTPKDSVLLNP) form a disordered region. The Hflx-type G domain maps to 346–585 (GTIAVVGYTN…LIDDKMKEKK (240 aa)). Residues 352-359 (GYTNAGKS), 377-381 (FATLD), 399-402 (DTVG), and 468-471 (NKID) each bind GTP. Residues S359 and T379 each coordinate Mg(2+). 2 stretches are compositionally biased toward acidic residues: residues 478–497 (EEEK…EDEA) and 511–521 (TVDEDQIQNGD). Positions 478 to 521 (EEEKYLDDGEGVGEEDEDEADLKAEETVDASEATVDEDQIQNGD) are disordered. Residue 563–565 (SAL) participates in GTP binding. Residues 597 to 620 (LHKRKWRPPRNDDEEERLIPLDQR) are disordered.

This sequence belongs to the TRAFAC class OBG-HflX-like GTPase superfamily. HflX GTPase family. Mg(2+) is required as a cofactor.

The protein localises to the plastid. Its subcellular location is the chloroplast. This chain is GTP-binding protein At3g49725, chloroplastic, found in Arabidopsis thaliana (Mouse-ear cress).